Reading from the N-terminus, the 457-residue chain is Bifunctional protein GlmU (457 aa).

Residues 1–227 are pyrophosphorylase; it reads MTQLSVVILA…FMEVEGANNR (227 aa). Residues 9-12, Lys-23, Gln-74, 79-80, 101-103, Gly-138, Glu-152, Asn-167, and Asn-225 contribute to the UDP-N-acetyl-alpha-D-glucosamine site; these read LAAG, GT, and YGD. Asp-103 lines the Mg(2+) pocket. Asn-225 provides a ligand contact to Mg(2+). Residues 228–248 are linker; sequence LQLAALERFYQKTQAEKLLLA. Residues 249–457 are N-acetyltransferase; the sequence is GVRLIDPARF…QRPTKKKIAD (209 aa). Residues Arg-331 and Lys-349 each contribute to the UDP-N-acetyl-alpha-D-glucosamine site. His-361 serves as the catalytic Proton acceptor. UDP-N-acetyl-alpha-D-glucosamine-binding residues include Tyr-364 and Asn-375. Acetyl-CoA contacts are provided by residues Ala-378, 384–385, Ser-403, Ala-421, and Arg-438; that span reads NY.

This sequence in the N-terminal section; belongs to the N-acetylglucosamine-1-phosphate uridyltransferase family. In the C-terminal section; belongs to the transferase hexapeptide repeat family. In terms of assembly, homotrimer. Mg(2+) is required as a cofactor.

It localises to the cytoplasm. The catalysed reaction is alpha-D-glucosamine 1-phosphate + acetyl-CoA = N-acetyl-alpha-D-glucosamine 1-phosphate + CoA + H(+). It catalyses the reaction N-acetyl-alpha-D-glucosamine 1-phosphate + UTP + H(+) = UDP-N-acetyl-alpha-D-glucosamine + diphosphate. The protein operates within nucleotide-sugar biosynthesis; UDP-N-acetyl-alpha-D-glucosamine biosynthesis; N-acetyl-alpha-D-glucosamine 1-phosphate from alpha-D-glucosamine 6-phosphate (route II): step 2/2. It functions in the pathway nucleotide-sugar biosynthesis; UDP-N-acetyl-alpha-D-glucosamine biosynthesis; UDP-N-acetyl-alpha-D-glucosamine from N-acetyl-alpha-D-glucosamine 1-phosphate: step 1/1. Its pathway is bacterial outer membrane biogenesis; LPS lipid A biosynthesis. Functionally, catalyzes the last two sequential reactions in the de novo biosynthetic pathway for UDP-N-acetylglucosamine (UDP-GlcNAc). The C-terminal domain catalyzes the transfer of acetyl group from acetyl coenzyme A to glucosamine-1-phosphate (GlcN-1-P) to produce N-acetylglucosamine-1-phosphate (GlcNAc-1-P), which is converted into UDP-GlcNAc by the transfer of uridine 5-monophosphate (from uridine 5-triphosphate), a reaction catalyzed by the N-terminal domain. The polypeptide is Bifunctional protein GlmU (Actinobacillus pleuropneumoniae serotype 5b (strain L20)).